A 397-amino-acid polypeptide reads, in one-letter code: Phosphoglycerate kinase (397 aa).

Substrate is bound by residues 22 to 24 (DYN), R38, 61 to 64 (HLGR), R119, and R152. Residues K203, G294, E325, and 351–354 (GGDT) contribute to the ATP site.

It belongs to the phosphoglycerate kinase family. As to quaternary structure, monomer.

The protein localises to the cytoplasm. The enzyme catalyses (2R)-3-phosphoglycerate + ATP = (2R)-3-phospho-glyceroyl phosphate + ADP. Its pathway is carbohydrate degradation; glycolysis; pyruvate from D-glyceraldehyde 3-phosphate: step 2/5. In Aquifex aeolicus (strain VF5), this protein is Phosphoglycerate kinase (pgk).